A 326-amino-acid polypeptide reads, in one-letter code: uncharacterized protein (326 aa).

ATP is bound at residue 127-134 (GATGSGKS).

This sequence belongs to the GSP E family.

This is an uncharacterized protein from Escherichia coli (strain K12).